We begin with the raw amino-acid sequence, 208 residues long: ATP-dependent Clp protease proteolytic subunit (208 aa).

Residue serine 106 is the Nucleophile of the active site. The active site involves histidine 131.

It belongs to the peptidase S14 family. Fourteen ClpP subunits assemble into 2 heptameric rings which stack back to back to give a disk-like structure with a central cavity, resembling the structure of eukaryotic proteasomes.

The protein localises to the cytoplasm. The enzyme catalyses Hydrolysis of proteins to small peptides in the presence of ATP and magnesium. alpha-casein is the usual test substrate. In the absence of ATP, only oligopeptides shorter than five residues are hydrolyzed (such as succinyl-Leu-Tyr-|-NHMec, and Leu-Tyr-Leu-|-Tyr-Trp, in which cleavage of the -Tyr-|-Leu- and -Tyr-|-Trp bonds also occurs).. Functionally, cleaves peptides in various proteins in a process that requires ATP hydrolysis. Has a chymotrypsin-like activity. Plays a major role in the degradation of misfolded proteins. In Caulobacter sp. (strain K31), this protein is ATP-dependent Clp protease proteolytic subunit.